A 501-amino-acid chain; its full sequence is ATP synthase subunit alpha (501 aa).

169–176 (GDRQTGKT) is a binding site for ATP.

It belongs to the ATPase alpha/beta chains family. F-type ATPases have 2 components, CF(1) - the catalytic core - and CF(0) - the membrane proton channel. CF(1) has five subunits: alpha(3), beta(3), gamma(1), delta(1), epsilon(1). CF(0) has three main subunits: a(1), b(2) and c(9-12). The alpha and beta chains form an alternating ring which encloses part of the gamma chain. CF(1) is attached to CF(0) by a central stalk formed by the gamma and epsilon chains, while a peripheral stalk is formed by the delta and b chains.

The protein resides in the cell membrane. It carries out the reaction ATP + H2O + 4 H(+)(in) = ADP + phosphate + 5 H(+)(out). Functionally, produces ATP from ADP in the presence of a proton gradient across the membrane. The alpha chain is a regulatory subunit. This is ATP synthase subunit alpha from Streptococcus thermophilus (strain CNRZ 1066).